Reading from the N-terminus, the 310-residue chain is Methionyl-tRNA formyltransferase (310 aa).

111–114 (SLLP) is a binding site for (6S)-5,6,7,8-tetrahydrofolate.

Belongs to the Fmt family.

It carries out the reaction L-methionyl-tRNA(fMet) + (6R)-10-formyltetrahydrofolate = N-formyl-L-methionyl-tRNA(fMet) + (6S)-5,6,7,8-tetrahydrofolate + H(+). Its function is as follows. Attaches a formyl group to the free amino group of methionyl-tRNA(fMet). The formyl group appears to play a dual role in the initiator identity of N-formylmethionyl-tRNA by promoting its recognition by IF2 and preventing the misappropriation of this tRNA by the elongation apparatus. The chain is Methionyl-tRNA formyltransferase from Rhodopseudomonas palustris (strain BisB5).